A 340-amino-acid polypeptide reads, in one-letter code: Anthranilate phosphoribosyltransferase (340 aa).

5-phospho-alpha-D-ribose 1-diphosphate contacts are provided by residues Gly80, 83–84 (GD), Thr88, 90–93 (NIST), 108–116 (KHGNRAMSS), and Ser120. Gly80 is an anthranilate binding site. Ser92 lines the Mg(2+) pocket. Asn111 is an anthranilate binding site. Residue Arg166 participates in anthranilate binding. Residues Asp225 and Glu226 each contribute to the Mg(2+) site.

This sequence belongs to the anthranilate phosphoribosyltransferase family. In terms of assembly, homodimer. It depends on Mg(2+) as a cofactor.

The enzyme catalyses N-(5-phospho-beta-D-ribosyl)anthranilate + diphosphate = 5-phospho-alpha-D-ribose 1-diphosphate + anthranilate. Its pathway is amino-acid biosynthesis; L-tryptophan biosynthesis; L-tryptophan from chorismate: step 2/5. Functionally, catalyzes the transfer of the phosphoribosyl group of 5-phosphorylribose-1-pyrophosphate (PRPP) to anthranilate to yield N-(5'-phosphoribosyl)-anthranilate (PRA). The protein is Anthranilate phosphoribosyltransferase of Roseiflexus castenholzii (strain DSM 13941 / HLO8).